Consider the following 189-residue polypeptide: Molybdenum cofactor guanylyltransferase (189 aa).

Residues 12 to 14, K24, D68, and D94 each bind GTP; that span reads LAG. D94 is a binding site for Mg(2+).

This sequence belongs to the MobA family. As to quaternary structure, monomer. The cofactor is Mg(2+).

Its subcellular location is the cytoplasm. The enzyme catalyses Mo-molybdopterin + GTP + H(+) = Mo-molybdopterin guanine dinucleotide + diphosphate. Transfers a GMP moiety from GTP to Mo-molybdopterin (Mo-MPT) cofactor (Moco or molybdenum cofactor) to form Mo-molybdopterin guanine dinucleotide (Mo-MGD) cofactor. In Xanthomonas euvesicatoria pv. vesicatoria (strain 85-10) (Xanthomonas campestris pv. vesicatoria), this protein is Molybdenum cofactor guanylyltransferase.